Consider the following 290-residue polypeptide: 4-hydroxybenzoate octaprenyltransferase (290 aa).

Transmembrane regions (helical) follow at residues 21-41, 44-64, 84-104, 106-126, 142-162, 212-232, 235-255, and 267-287; these read IGTL…VKGM, LSIL…GCVI, LATG…LVFC, FILV…AVFL, LFLG…SIEA, IISL…YLSQ, TSYF…CKLI, and FLNN…GIFF.

This sequence belongs to the UbiA prenyltransferase family. It depends on Mg(2+) as a cofactor.

It is found in the cell inner membrane. The enzyme catalyses all-trans-octaprenyl diphosphate + 4-hydroxybenzoate = 4-hydroxy-3-(all-trans-octaprenyl)benzoate + diphosphate. It participates in cofactor biosynthesis; ubiquinone biosynthesis. Catalyzes the prenylation of para-hydroxybenzoate (PHB) with an all-trans polyprenyl group. Mediates the second step in the final reaction sequence of ubiquinone-8 (UQ-8) biosynthesis, which is the condensation of the polyisoprenoid side chain with PHB, generating the first membrane-bound Q intermediate 3-octaprenyl-4-hydroxybenzoate. The chain is 4-hydroxybenzoate octaprenyltransferase from Pasteurella multocida (strain Pm70).